Here is a 49-residue protein sequence, read N- to C-terminus: Venom peptide 3 (49 aa).

Residues 1 to 23 (MRFTFVLVIAATVAVLGFFGINA) form the signal peptide. AXPX repeat units lie at residues 23–26 (AEPM) and 31–34 (AEPY). Residues 24-37 (EPMPDPHAEPYPDA) constitute a propeptide that is removed on maturation. The residue at position 48 (Leu-48) is a Leucine amide.

In terms of tissue distribution, expressed by the venom gland.

The protein resides in the secreted. The chain is Venom peptide 3 from Eumenes pomiformis (Potter wasp).